Here is a 294-residue protein sequence, read N- to C-terminus: dTDP-4-dehydrorhamnose reductase (294 aa).

Residues 11-13 (GQL), 38-39 (DI), and 62-64 (AYT) each bind NADH. NADPH contacts are provided by residues 12-13 (QL), 38-39 (DI), and 62-64 (AYT). 103-104 (TD) is a dTDP-beta-L-rhamnose binding site. Residues Tyr-127 and Lys-131 each contribute to the NADH site. Residues Tyr-127 and Lys-131 each coordinate NADPH. Residue Tyr-127 is the Proton donor/acceptor of the active site. DTDP-beta-L-rhamnose is bound at residue Trp-152.

It belongs to the dTDP-4-dehydrorhamnose reductase family. Homodimer. Mg(2+) serves as cofactor.

The catalysed reaction is dTDP-beta-L-rhamnose + NADP(+) = dTDP-4-dehydro-beta-L-rhamnose + NADPH + H(+). Its pathway is carbohydrate biosynthesis; dTDP-L-rhamnose biosynthesis. The protein operates within bacterial outer membrane biogenesis; LPS O-antigen biosynthesis. Its function is as follows. Involved in the biosynthesis of the dTDP-L-rhamnose which is an important component of lipopolysaccharide (LPS). Catalyzes the reduction of dTDP-6-deoxy-L-lyxo-4-hexulose to yield dTDP-L-rhamnose. The protein is dTDP-4-dehydrorhamnose reductase of Aggregatibacter actinomycetemcomitans (Actinobacillus actinomycetemcomitans).